We begin with the raw amino-acid sequence, 489 residues long: MYASLMDVGQTLAARLADSDGNGANDSGLLATGQGLEQEQEGLALDMGHNASADGGIVPYVPVLDRPETYIVTVLYTLIFIVGVLGNGTLVIIFFRHRSMRNIPNTYILSLALADLLVILVCVPVATIVYTQESWPFERNMCRISEFFKDISIGVSVFTLTALSGERYCAIVNPLRKLQTKPLTVFTAVMIWILAILLGMPSVLFSDIKSYPVFTATGNMTIEVCSPFRDPEYAKFMVAGKALVYYLLPLSIIGALYIMMAKRLHMSARNMPGEQQSMQSRTQARARLHVARMVVAFVVVFFICFFPYHVFELWYHFYPTAEEDFDEFWNVLRIVGFCTSFLNSCVNPVALYCVSGVFRQHFNRYLCCICVKRQPHLRQHSTATGMMDNTSVMSMRRSTYVGGTAGNLRASLHRNSNHGVGGAGGGVGGGVGSGRVGSFHRQDSMPLQHGNAHGGGAGGGSSGLGAGGRTAAVSEKSFINRYESGVMRY.

Over 1–74 (MYASLMDVGQ…DRPETYIVTV (74 aa)) the chain is Extracellular. N-linked (GlcNAc...) asparagine glycans are attached at residues Asn-25 and Asn-50. A helical transmembrane segment spans residues 75–95 (LYTLIFIVGVLGNGTLVIIFF). At 96–107 (RHRSMRNIPNTY) the chain is on the cytoplasmic side. Residues 108 to 128 (ILSLALADLLVILVCVPVATI) traverse the membrane as a helical segment. Topologically, residues 129-143 (VYTQESWPFERNMCR) are extracellular. Cys-142 and Cys-225 form a disulfide bridge. Residues 144 to 164 (ISEFFKDISIGVSVFTLTALS) form a helical membrane-spanning segment. Over 165-184 (GERYCAIVNPLRKLQTKPLT) the chain is Cytoplasmic. Residues 185 to 205 (VFTAVMIWILAILLGMPSVLF) traverse the membrane as a helical segment. The Extracellular portion of the chain corresponds to 206–235 (SDIKSYPVFTATGNMTIEVCSPFRDPEYAK). Asn-219 carries an N-linked (GlcNAc...) asparagine glycan. The helical transmembrane segment at 236–256 (FMVAGKALVYYLLPLSIIGAL) threads the bilayer. The Cytoplasmic segment spans residues 257–293 (YIMMAKRLHMSARNMPGEQQSMQSRTQARARLHVARM). Residues 294-314 (VVAFVVVFFICFFPYHVFELW) form a helical membrane-spanning segment. Topologically, residues 315-333 (YHFYPTAEEDFDEFWNVLR) are extracellular. The chain crosses the membrane as a helical span at residues 334–354 (IVGFCTSFLNSCVNPVALYCV). Residues 355 to 489 (SGVFRQHFNR…NRYESGVMRY (135 aa)) lie on the Cytoplasmic side of the membrane. The segment at 438–468 (SFHRQDSMPLQHGNAHGGGAGGGSSGLGAGG) is disordered. Gly residues predominate over residues 452 to 468 (AHGGGAGGGSSGLGAGG).

Belongs to the G-protein coupled receptor 1 family. Highly expressed in larval brain. Also highly expressed in adult brain with very low levels in larval and adult gut.

Its subcellular location is the cell membrane. Its function is as follows. Receptor for the neuropeptide CCHamide-2. This is Neuropeptide CCHamide-2 receptor from Drosophila melanogaster (Fruit fly).